We begin with the raw amino-acid sequence, 362 residues long: Protein indeterminate-domain 16 (362 aa).

Positions 1 to 22 (MELTQPIRENGDPQGHQLTDPD) are disordered. 2 C2H2-type zinc fingers span residues 39 to 61 (YVCEICNQGFQRDQNLQMHRRRH) and 82 to 112 (YVCPEPTCLHHDPCHALGDLVGIKKHFRRKH). Residues 118 to 142 (WVCERCSKGYAVQSDYKAHLKTCGS) form a CCHC-type 1; atypical zinc finger. Cys-120, Cys-123, His-136, Cys-140, Cys-147, Cys-149, His-162, and Cys-166 together coordinate Zn(2+). The CCHC-type 2; atypical zinc finger occupies 145–168 (HSCDCGRVFSRVESFIEHQDTCTI). The tract at residues 155 to 167 (RVESFIEHQDTCT) is SHR-binding. Residues 247–278 (SAQARHNEKRETSLTKERANEEARKAEETRQE) are disordered. Residues 251 to 278 (RHNEKRETSLTKERANEEARKAEETRQE) show a composition bias toward basic and acidic residues. A coiled-coil region spans residues 252-319 (HNEKRETSLT…VREEAIKRIN (68 aa)).

As to expression, highly expressed in leaves, hypocotyls, roots, vasculature of cotyledons, floral organs and in the endodermis and vasculaturenof inflorescence stems.

It localises to the nucleus. Transcription factor regulating lateral organ morphogenesis and gravitropic responses. Has a redundant role with IDD14 in directing leaf and floral organ morphogenesis. Acts cooperatively with IDD15 to control silique and branche orientation. Involved in the establishment of auxin gradients through the regulation of auxin biosynthesis and transport. The chain is Protein indeterminate-domain 16 from Arabidopsis thaliana (Mouse-ear cress).